The chain runs to 418 residues: AP-3 complex subunit mu-1 (418 aa).

The MHD domain occupies 176–417 (NNEAYFDVVE…VTKAGKFQVR (242 aa)).

Belongs to the adaptor complexes medium subunit family. As to quaternary structure, adaptor protein complex 3 (AP-3) is a heterotetramer composed of two large adaptins (delta-type subunit AP3D1 and beta-type subunit AP3B1 or AP3B2), a medium adaptin (mu-type subunit AP3M1 or AP3M2) and a small adaptin (sigma-type subunit APS1 or AP3S2). Interacts with AGAP1. AP-3 associates with the BLOC-1 complex.

Its subcellular location is the golgi apparatus. The protein resides in the cytoplasmic vesicle membrane. Part of the AP-3 complex, an adaptor-related complex which is not clathrin-associated. The complex is associated with the Golgi region as well as more peripheral structures. It facilitates the budding of vesicles from the Golgi membrane and may be directly involved in trafficking to lysosomes. In concert with the BLOC-1 complex, AP-3 is required to target cargos into vesicles assembled at cell bodies for delivery into neurites and nerve terminals. The polypeptide is AP-3 complex subunit mu-1 (AP3M1) (Bos taurus (Bovine)).